We begin with the raw amino-acid sequence, 109 residues long: Large ribosomal subunit protein uL24 (109 aa).

Belongs to the universal ribosomal protein uL24 family. As to quaternary structure, part of the 50S ribosomal subunit.

One of two assembly initiator proteins, it binds directly to the 5'-end of the 23S rRNA, where it nucleates assembly of the 50S subunit. Its function is as follows. One of the proteins that surrounds the polypeptide exit tunnel on the outside of the subunit. This Legionella pneumophila subsp. pneumophila (strain Philadelphia 1 / ATCC 33152 / DSM 7513) protein is Large ribosomal subunit protein uL24.